Reading from the N-terminus, the 25-residue chain is WLGSALKIGAKLLPSVVGLFKKKKQ.

In terms of tissue distribution, expressed by the venom gland.

Its subcellular location is the secreted. It is found in the target cell membrane. Its function is as follows. Has a broad spectrum of activity against both Gram-positive and Gram-negative bacteria and S.cerevisiae. Has insecticidal and hemolytic activities. May act by disrupting the integrity of the bacterial cell membrane. The sequence is that of M-poneritoxin-Ng1a from Neoponera goeldii (Ponerine ant).